A 37-amino-acid polypeptide reads, in one-letter code: Cytochrome b6-f complex subunit 5 (37 aa).

Residues 5–25 (LLDGLVLGLVFATLGGLFYAA) form a helical membrane-spanning segment.

Belongs to the PetG family. As to quaternary structure, the 4 large subunits of the cytochrome b6-f complex are cytochrome b6, subunit IV (17 kDa polypeptide, PetD), cytochrome f and the Rieske protein, while the 4 small subunits are PetG, PetL, PetM and PetN. The complex functions as a dimer.

The protein resides in the cellular thylakoid membrane. In terms of biological role, component of the cytochrome b6-f complex, which mediates electron transfer between photosystem II (PSII) and photosystem I (PSI), cyclic electron flow around PSI, and state transitions. PetG is required for either the stability or assembly of the cytochrome b6-f complex. This Mastigocladus laminosus (Fischerella sp.) protein is Cytochrome b6-f complex subunit 5.